We begin with the raw amino-acid sequence, 581 residues long: Membrane protein insertase YidC (581 aa).

A helical transmembrane segment spans residues 7-27; it reads ILIVALAVVSYLMVLQWNEDY. Residues 41-62 form a disordered region; it reads AATPALPDTPADTASTGGDDIP. Transmembrane regions (helical) follow at residues 365–385, 388–408, 458–478, 489–509, and 536–556; these read TVDY…LEVI, LLGN…LIFF, LGGC…YWVL, WMFW…PIIM, and PIIF…YWVV.

This sequence belongs to the OXA1/ALB3/YidC family. Type 1 subfamily. As to quaternary structure, interacts with the Sec translocase complex via SecD. Specifically interacts with transmembrane segments of nascent integral membrane proteins during membrane integration.

It is found in the cell inner membrane. Functionally, required for the insertion and/or proper folding and/or complex formation of integral membrane proteins into the membrane. Involved in integration of membrane proteins that insert both dependently and independently of the Sec translocase complex, as well as at least some lipoproteins. Aids folding of multispanning membrane proteins. The protein is Membrane protein insertase YidC of Ectopseudomonas mendocina (strain ymp) (Pseudomonas mendocina).